Reading from the N-terminus, the 340-residue chain is Protein RecA (340 aa).

Position 65-72 (65-72 (GPESGGKT)) interacts with ATP.

The protein belongs to the RecA family.

It localises to the cytoplasm. In terms of biological role, can catalyze the hydrolysis of ATP in the presence of single-stranded DNA, the ATP-dependent uptake of single-stranded DNA by duplex DNA, and the ATP-dependent hybridization of homologous single-stranded DNAs. It interacts with LexA causing its activation and leading to its autocatalytic cleavage. In Thermus thermophilus, this protein is Protein RecA.